Consider the following 174-residue polypeptide: Gamma-crystallin C (174 aa).

2 Beta/gamma crystallin 'Greek key' domains span residues 2-40 and 41-83; these read GKIT…RVDS and GCWM…RLIP. Cys23 bears the S-methylcysteine mark. Residues 84–87 form a connecting peptide region; it reads HTGS. Beta/gamma crystallin 'Greek key' domains lie at 88–128 and 129–171; these read HRMR…HVLE and GCWV…RRVV.

The protein belongs to the beta/gamma-crystallin family.

Crystallins are the dominant structural components of the vertebrate eye lens. This chain is Gamma-crystallin C (Crygc), found in Rattus norvegicus (Rat).